The following is a 263-amino-acid chain: Tryptophan synthase alpha chain (263 aa).

Catalysis depends on proton acceptor residues glutamate 50 and aspartate 61.

This sequence belongs to the TrpA family. In terms of assembly, tetramer of two alpha and two beta chains.

The enzyme catalyses (1S,2R)-1-C-(indol-3-yl)glycerol 3-phosphate + L-serine = D-glyceraldehyde 3-phosphate + L-tryptophan + H2O. Its pathway is amino-acid biosynthesis; L-tryptophan biosynthesis; L-tryptophan from chorismate: step 5/5. Its function is as follows. The alpha subunit is responsible for the aldol cleavage of indoleglycerol phosphate to indole and glyceraldehyde 3-phosphate. The protein is Tryptophan synthase alpha chain of Clostridium acetobutylicum (strain ATCC 824 / DSM 792 / JCM 1419 / IAM 19013 / LMG 5710 / NBRC 13948 / NRRL B-527 / VKM B-1787 / 2291 / W).